Consider the following 155-residue polypeptide: UPF0260 protein R01011 (155 aa).

The protein belongs to the UPF0260 family.

This Rhizobium meliloti (strain 1021) (Ensifer meliloti) protein is UPF0260 protein R01011.